The following is a 539-amino-acid chain: Probable protein kinase UbiB (539 aa).

The chain crosses the membrane as a helical span at residues 23–43; it reads DLLFALPLPWWMLALRFVLPW. Residues 125-492 form the Protein kinase domain; that stretch reads RFDEKPLASA…WHDRKDEPVL (368 aa). Residues 131-139 and Lys153 each bind ATP; that span reads LASASVAQV. Asp288 functions as the Proton acceptor in the catalytic mechanism. The next 2 membrane-spanning stretches (helical) occupy residues 494 to 514 and 517 to 537; these read LIGA…SEAA and LLTL…YLIV.

Belongs to the ABC1 family. UbiB subfamily.

The protein localises to the cell inner membrane. The protein operates within cofactor biosynthesis; ubiquinone biosynthesis [regulation]. In terms of biological role, is probably a protein kinase regulator of UbiI activity which is involved in aerobic coenzyme Q (ubiquinone) biosynthesis. The protein is Probable protein kinase UbiB of Pseudomonas syringae pv. syringae (strain B728a).